We begin with the raw amino-acid sequence, 304 residues long: Quinolinate synthase (304 aa).

The iminosuccinate site is built by histidine 24 and serine 41. Cysteine 86 provides a ligand contact to [4Fe-4S] cluster. Iminosuccinate-binding positions include 112–114 (YVN) and serine 129. Cysteine 171 is a binding site for [4Fe-4S] cluster. Iminosuccinate contacts are provided by residues 197-199 (HPE) and threonine 214. Cysteine 259 contacts [4Fe-4S] cluster.

The protein belongs to the quinolinate synthase family. Type 2 subfamily. [4Fe-4S] cluster serves as cofactor.

Its subcellular location is the cytoplasm. The catalysed reaction is iminosuccinate + dihydroxyacetone phosphate = quinolinate + phosphate + 2 H2O + H(+). It functions in the pathway cofactor biosynthesis; NAD(+) biosynthesis; quinolinate from iminoaspartate: step 1/1. Functionally, catalyzes the condensation of iminoaspartate with dihydroxyacetone phosphate to form quinolinate. The protein is Quinolinate synthase of Geobacter sp. (strain M21).